The following is a 110-amino-acid chain: UPF0060 membrane protein PBPRB0495 (110 aa).

A run of 4 helical transmembrane segments spans residues Val7–Trp27, Thr33–Leu53, Ala63–Ile83, and Pro85–Phe105.

It belongs to the UPF0060 family.

Its subcellular location is the cell inner membrane. The chain is UPF0060 membrane protein PBPRB0495 from Photobacterium profundum (strain SS9).